We begin with the raw amino-acid sequence, 350 residues long: Anthranilate phosphoribosyltransferase (350 aa).

5-phospho-alpha-D-ribose 1-diphosphate is bound by residues Gly-94, 97-98, Thr-102, 104-107, 122-130, and Ser-134; these read GD, NIST, and KHGNRAVSS. Gly-94 provides a ligand contact to anthranilate. A Mg(2+)-binding site is contributed by Ser-106. Asn-125 is an anthranilate binding site. Arg-180 contributes to the anthranilate binding site. Mg(2+)-binding residues include Asp-239 and Glu-240.

Belongs to the anthranilate phosphoribosyltransferase family. As to quaternary structure, homodimer. Mg(2+) is required as a cofactor.

The enzyme catalyses N-(5-phospho-beta-D-ribosyl)anthranilate + diphosphate = 5-phospho-alpha-D-ribose 1-diphosphate + anthranilate. It participates in amino-acid biosynthesis; L-tryptophan biosynthesis; L-tryptophan from chorismate: step 2/5. Its function is as follows. Catalyzes the transfer of the phosphoribosyl group of 5-phosphorylribose-1-pyrophosphate (PRPP) to anthranilate to yield N-(5'-phosphoribosyl)-anthranilate (PRA). The chain is Anthranilate phosphoribosyltransferase from Geobacter sulfurreducens (strain ATCC 51573 / DSM 12127 / PCA).